The sequence spans 338 residues: MNSVKRVKLNSKMSKQICTHSGSFHADESLAVYMLRLLPEFKDAKLVRSRNPKDWEASDILVDVGAQYDGVKFFDHHQRGFFETFNEKYKTKLSSAGLIFKHYGRDIIKTILNNKVSSSDLDLLYDKVYKQFVEALDANDNGISKYTIPKDSNLEPNFRDNAISIPGIISGMNPNWNEDTSDESFDRCFARASEFIGGVFVTLVRGYGQSWLPAKALVAQAIDERMDVDKSGKIIVLPQFCPWKEHLYELEREKNIEKQIEFVLFTDSSGAWRVSTVPINSTSFQFRRGLPEPLRGLRDEELSTKSGVPGCIFIHAAGFIGGAKSKEAVYELAKMSLA.

Belongs to the MYG1 family.

The chain is MYG1 protein YER156C from Saccharomyces cerevisiae (strain ATCC 204508 / S288c) (Baker's yeast).